Here is a 294-residue protein sequence, read N- to C-terminus: ATP synthase gamma chain (294 aa).

It belongs to the ATPase gamma chain family. As to quaternary structure, F-type ATPases have 2 components, CF(1) - the catalytic core - and CF(0) - the membrane proton channel. CF(1) has five subunits: alpha(3), beta(3), gamma(1), delta(1), epsilon(1). CF(0) has three main subunits: a, b and c.

It localises to the cell inner membrane. Produces ATP from ADP in the presence of a proton gradient across the membrane. The gamma chain is believed to be important in regulating ATPase activity and the flow of protons through the CF(0) complex. In Rhizobium johnstonii (strain DSM 114642 / LMG 32736 / 3841) (Rhizobium leguminosarum bv. viciae), this protein is ATP synthase gamma chain.